The primary structure comprises 147 residues: Large ribosomal subunit protein uL13 (147 aa).

It belongs to the universal ribosomal protein uL13 family. In terms of assembly, part of the 50S ribosomal subunit.

In terms of biological role, this protein is one of the early assembly proteins of the 50S ribosomal subunit, although it is not seen to bind rRNA by itself. It is important during the early stages of 50S assembly. The chain is Large ribosomal subunit protein uL13 from Streptomyces avermitilis (strain ATCC 31267 / DSM 46492 / JCM 5070 / NBRC 14893 / NCIMB 12804 / NRRL 8165 / MA-4680).